Reading from the N-terminus, the 697-residue chain is tRNA 5-methylaminomethyl-2-thiouridine biosynthesis bifunctional protein MnmC (697 aa).

The segment at 1-269 (MNKTPLLSVS…LRQQLQQQFA (269 aa)) is tRNA (mnm(5)s(2)U34)-methyltransferase. The interval 287–697 (IGGGIASASL…RKLLKGKALM (411 aa)) is FAD-dependent cmnm(5)s(2)U34 oxidoreductase.

The protein in the N-terminal section; belongs to the methyltransferase superfamily. tRNA (mnm(5)s(2)U34)-methyltransferase family. In the C-terminal section; belongs to the DAO family. The cofactor is FAD.

It localises to the cytoplasm. The catalysed reaction is 5-aminomethyl-2-thiouridine(34) in tRNA + S-adenosyl-L-methionine = 5-methylaminomethyl-2-thiouridine(34) in tRNA + S-adenosyl-L-homocysteine + H(+). Its function is as follows. Catalyzes the last two steps in the biosynthesis of 5-methylaminomethyl-2-thiouridine (mnm(5)s(2)U) at the wobble position (U34) in tRNA. Catalyzes the FAD-dependent demodification of cmnm(5)s(2)U34 to nm(5)s(2)U34, followed by the transfer of a methyl group from S-adenosyl-L-methionine to nm(5)s(2)U34, to form mnm(5)s(2)U34. In Shewanella frigidimarina (strain NCIMB 400), this protein is tRNA 5-methylaminomethyl-2-thiouridine biosynthesis bifunctional protein MnmC.